A 180-amino-acid chain; its full sequence is MELIYGSTMRKKWIEPALRFLPVGLCISALALMLKSKEGNENGILEYKHVGAFRYLAYANGICAAYSVLSTFNSVVPRSCSLSRAWFVFVFDQAFTYLMLGAGAVVTEVLYLAYKGDEKITWFEICPYYGRFCNRVAASLVISFLALLCFIPLSLISAYRVFSKYDPPSLCKKDQITSQS.

Residues 1-13 (MELIYGSTMRKKW) are Cytoplasmic-facing. A helical transmembrane segment spans residues 14 to 34 (IEPALRFLPVGLCISALALML). The Extracellular segment spans residues 35–55 (KSKEGNENGILEYKHVGAFRY). Residues 56–76 (LAYANGICAAYSVLSTFNSVV) traverse the membrane as a helical segment. Residues 77 to 85 (PRSCSLSRA) are Cytoplasmic-facing. The helical transmembrane segment at 86-106 (WFVFVFDQAFTYLMLGAGAVV) threads the bilayer. The Extracellular segment spans residues 107 to 135 (TEVLYLAYKGDEKITWFEICPYYGRFCNR). Residues 136–156 (VAASLVISFLALLCFIPLSLI) traverse the membrane as a helical segment. Over 157–180 (SAYRVFSKYDPPSLCKKDQITSQS) the chain is Cytoplasmic.

The protein belongs to the Casparian strip membrane proteins (CASP) family. As to quaternary structure, homodimer and heterodimers.

Its subcellular location is the cell membrane. This is CASP-like protein 2A3 from Picea sitchensis (Sitka spruce).